The primary structure comprises 478 residues: MTKKVIRKPDSLHEVFERKGGSAPTATHYCAGCGHGILHKLIGEAIDELGIQERSVMISPVGCAVFAYYYFDCGNVQVAHGRAPAVGTGISRAEDTPVVLLYQGDGDLASIGLNETIQAANRGEKMAVFFVNNTVYGMTGGQMAPTTLIGEVTVTCPGGRDPRYAGYPLHMCELLDNLQAPVFIERVSLADPKSIRKAKRAVKRALEIQRDGKGYAFVEVLSPCPTNLRQDAEGAERFLKEEMEREFPVKNFRDRSSETEPLIRSESDFSRESLDRIFQIKEDSVPDPVDDPEFREVRVKIAGFGGQGVLSMGLTLAQAACSEGRHTSWYPAYGPEQRGGTSSCGVVISGERVGSPAVDTPDVLVAFNQPSLDEFAGDVREGGIVLYDTATADFSKKENLRAIGVPALEIAKEHGTGRAANTAMLGVMMALGITGLDEESFRDAIRFTFSGKDKIIDINLKILEAGADWARKNLEGEF.

As to quaternary structure, heterotrimer of the VorA, VorB and VorC subunits.

This chain is Ketoisovalerate oxidoreductase subunit VorA (vorA), found in Methanothermobacter marburgensis (strain ATCC BAA-927 / DSM 2133 / JCM 14651 / NBRC 100331 / OCM 82 / Marburg) (Methanobacterium thermoautotrophicum).